The sequence spans 249 residues: Phosphoserine phosphatase (249 aa).

This sequence belongs to the HAD-like hydrolase superfamily. In terms of assembly, homodimer. The cofactor is Mg(2+). Co(2+) serves as cofactor.

The enzyme catalyses O-phospho-L-serine + H2O = L-serine + phosphate. It catalyses the reaction O-phospho-D-serine + H2O = D-serine + phosphate. The protein operates within amino-acid biosynthesis; L-serine biosynthesis; L-serine from 3-phospho-D-glycerate: step 3/3. Its function is as follows. Catalyzes the last step of the phosphorylated serine biosynthetic pathway, i.e. dephosphorylation of O-phospho-L-serine to form L-serine. Is also able to dephosphorylate O-phospho-D-serine with similar efficiency. Displays a poor activity on L-phosphothreonine, and cannot use L-phosphotyrosine, pyridoxal phosphate, glucose 6-phosphate, or fructose 6-phosphate as substrates. The chain is Phosphoserine phosphatase from Thermus thermophilus (strain ATCC BAA-163 / DSM 7039 / HB27).